The following is a 552-amino-acid chain: MELKWVSCRKQSLFLISCLALLCLASLDTISCESTQNATDFKKRSQTVSCPPDWIIGPNQTKCYAYFKNSTSWEKSEMFCRTYGGHLASLASSKELSFVQKLCNGNVSSCWIGGRSMNSSTSGFRWSWSDPKTPQWNQSMFPKVPIRTRCGNGNGSSSCRANICIAVTNGSSSIFGERCNASHAFVCAVDSDIKCRNCHKYLVILAVVSGLILFTTFAIILWLLVYKRSKKRRKSRKVSNPASSSSVVPPSWKIFTSEELRSMTKNFSEANRLAGDAKTGGTYSGGLSDGTKVAVKRLKRSSFQRKKEFYSEIRRAAKLYHPNVVAIKGCCYDHGERFIVYEFIASGPLDRWLHHVPRGGRSLDWNMRLNIATTLAQGIAFLHDKVKPQVVHRDIRASNVLLDEEFGAHLMGVGLSKFVPWEVMQERTVMAGGTYGYLAPEYVYRNELTTKSDVYSFGVLLLEIVSGRRPTQAVNSSVGWQSIFEWATPLVQANRWLEILDPVITCGLPEACVVQKVVDLVYSCTQNVPSMRPRMSHVVHQLQQLVQPLEVK.

Residues Met1 to Leu27 form the signal peptide. The Extracellular segment spans residues Asp28–Tyr201. Residues Asn37, Asn59, Asn69, Asn106, Asn118, Asn137, Asn154, Asn169, and Asn180 are each glycosylated (N-linked (GlcNAc...) asparagine). A C-type lectin domain is found at Asn59–Ala188. 2 disulfide bridges follow: Cys80–Cys187 and Cys164–Cys179. The helical transmembrane segment at Leu202–Trp222 threads the bilayer. Topologically, residues Leu223 to Lys552 are cytoplasmic. One can recognise a Protein kinase domain in the interval Ser268–Val546. ATP-binding positions include Ala274–Thr282 and Lys296. The active-site Proton acceptor is Asp394.

Belongs to the protein kinase superfamily. Tyr protein kinase family.

It is found in the cell membrane. It catalyses the reaction L-tyrosyl-[protein] + ATP = O-phospho-L-tyrosyl-[protein] + ADP + H(+). This chain is C-type lectin receptor-like tyrosine-protein kinase At1g52310, found in Arabidopsis thaliana (Mouse-ear cress).